Here is a 75-residue protein sequence, read N- to C-terminus: MEKKSIAGLCFLFLVLFVAQEVVVQSEAKTCENLVDTYRGPCFTTGSCDDHCKNKEHLLSGRCRDDVRCWCTRNC.

The signal sequence occupies residues 1 to 24; sequence MEKKSIAGLCFLFLVLFVAQEVVV. Disulfide bonds link Cys-31–Cys-75, Cys-42–Cys-63, Cys-48–Cys-69, and Cys-52–Cys-71.

This sequence belongs to the DEFL family.

It is found in the secreted. Functionally, this protein is required for germination. The polypeptide is Defensin-like protein (Vigna unguiculata (Cowpea)).